We begin with the raw amino-acid sequence, 268 residues long: Movement protein (268 aa).

The interval 215–243 is disordered; the sequence is GKKSDVRKGKNSSSDRSVPNKNYRNVKDF. Residues 225 to 237 are compositionally biased toward polar residues; sequence NSSSDRSVPNKNY.

This sequence belongs to the tobamovirus movement protein family. In terms of assembly, binds to host RBCS at the plasmodesmata; this interaction seems required for viral systemic movement. In resistant plants, interacts with host MBP2C at host microtubules; this interaction prevents virus cell to cell movement. In resistant plants, interacts with host resistance (R) protein (e.g. tomato ToMV resistance protein TM-2(2), AC Q71BG9) at the host plasma membrane; this interaction triggers host defense responses leading to programmed cell death.

Its subcellular location is the host cytoplasm. The protein resides in the host cytoskeleton. The protein localises to the host cell junction. It localises to the host plasmodesma. Transports viral genome to neighboring plant cells directly through plasmosdesmata, without any budding. The movement protein allows efficient cell to cell propagation, by bypassing the host cell wall barrier. Forms a ribonucleoprotein complex with viral RNA. Binds microtubules and modulates microtubule stability. Can bind double-stranded DNA. Triggers host hypersensitive defense reaction in incompatible plants harboring resistance (R) proteins. This Nicotiana tabacum (Common tobacco) protein is Movement protein (MP).